We begin with the raw amino-acid sequence, 353 residues long: Outer membrane protein P5 (353 aa).

Positions 1–21 (MKKTAIALVVAGLAAASVAQA) are cleaved as a signal peptide. 8 beta stranded membrane-spanning segments follow: residues 27–37 (TFYAGVKAGQA), 58–69 (SFTYGVFGGYQI), 77–85 (LAVELGYDD), 104–115 (HGAHLSLKGSYE), 120–128 (LDVYGKAGV), 158–167 (GLFAVGAEYA), 172–179 (LAVRLEYQ), and 205–213 (SINAGISYR). Residues 227-353 (VVSKTFSLNS…RVEIAVNGTK (127 aa)) enclose the OmpA-like domain. Cysteine 326 and cysteine 338 are joined by a disulfide.

It belongs to the outer membrane OOP (TC 1.B.6) superfamily. OmpA family. In terms of assembly, monomer and homodimer.

It localises to the cell outer membrane. Its function is as follows. With TolR probably plays a role in maintaining the position of the peptidoglycan cell wall in the periplasm. Acts as a porin with low permeability that allows slow penetration of small solutes; an internal gate slows down solute passage. The protein is Outer membrane protein P5 of Haemophilus influenzae.